Here is a 123-residue protein sequence, read N- to C-terminus: Small ribosomal subunit protein uS12cz/uS12cy (123 aa).

This sequence belongs to the universal ribosomal protein uS12 family. In terms of assembly, part of the 30S ribosomal subunit.

The protein localises to the plastid. It localises to the chloroplast. In terms of biological role, with S4 and S5 plays an important role in translational accuracy. Located at the interface of the 30S and 50S subunits. This chain is Small ribosomal subunit protein uS12cz/uS12cy (rps12-A), found in Atropa belladonna (Belladonna).